The chain runs to 386 residues: Short-chain dehydrogenase/reductase family 42E member 1 (386 aa).

The active-site Proton acceptor is the tyrosine 150. Lysine 154 provides a ligand contact to NAD(+). 2 helical membrane passes run 279 to 299 and 363 to 383; these read FPLS…FFIS and YLIW…SWLP.

The protein belongs to the 3-beta-HSD family.

The protein localises to the membrane. In Xenopus laevis (African clawed frog), this protein is Short-chain dehydrogenase/reductase family 42E member 1 (sdr42e1).